Reading from the N-terminus, the 842-residue chain is uncharacterized protein (842 aa).

2 disordered regions span residues 1 to 20 (MLHF…SPKE) and 142 to 209 (NSSS…TSSS). A uDENN FNIP1/2-type domain is found at 35 to 422 (TKDVTFRLVL…TAKSFHKCIL (388 aa)). Over residues 183–209 (ANLSSSSKNMKDSTLSSQKARSNTSSS) the composition is skewed to polar residues. The 343-residue stretch at 430-772 (APLIKPSVFS…CYEIHEFPSE (343 aa)) folds into the cDENN FNIP1/2-type domain. Phosphoserine is present on residues S573 and S590. The 66-residue stretch at 777–842 (YAPFLLKEHH…KEVLRVCSHC (66 aa)) folds into the dDENN FNIP1/2-type domain.

Its subcellular location is the cytoplasm. This is an uncharacterized protein from Schizosaccharomyces pombe (strain 972 / ATCC 24843) (Fission yeast).